We begin with the raw amino-acid sequence, 127 residues long: Ribosome-binding factor A (127 aa).

This sequence belongs to the RbfA family. In terms of assembly, monomer. Binds 30S ribosomal subunits, but not 50S ribosomal subunits or 70S ribosomes.

It is found in the cytoplasm. In terms of biological role, one of several proteins that assist in the late maturation steps of the functional core of the 30S ribosomal subunit. Associates with free 30S ribosomal subunits (but not with 30S subunits that are part of 70S ribosomes or polysomes). Required for efficient processing of 16S rRNA. May interact with the 5'-terminal helix region of 16S rRNA. In Nitrosococcus oceani (strain ATCC 19707 / BCRC 17464 / JCM 30415 / NCIMB 11848 / C-107), this protein is Ribosome-binding factor A.